Reading from the N-terminus, the 226-residue chain is NAD(P)H-hydrate epimerase (226 aa).

In terms of domain architecture, YjeF N-terminal spans 10–215 (AIELDLDLFE…ALQRKYQLNL (206 aa)). 58 to 62 (NNGGD) is a binding site for (6S)-NADPHX. 2 residues coordinate K(+): N59 and D123. (6S)-NADPHX-binding positions include 127 to 133 (GFGFKPP) and D156. Residue S159 coordinates K(+).

It belongs to the NnrE/AIBP family. K(+) serves as cofactor.

It catalyses the reaction (6R)-NADHX = (6S)-NADHX. The catalysed reaction is (6R)-NADPHX = (6S)-NADPHX. Catalyzes the epimerization of the S- and R-forms of NAD(P)HX, a damaged form of NAD(P)H that is a result of enzymatic or heat-dependent hydration. This is a prerequisite for the S-specific NAD(P)H-hydrate dehydratase to allow the repair of both epimers of NAD(P)HX. The sequence is that of NAD(P)H-hydrate epimerase from Drosophila persimilis (Fruit fly).